Consider the following 38-residue polypeptide: Large ribosomal subunit protein bL36 (38 aa).

The protein belongs to the bacterial ribosomal protein bL36 family.

The polypeptide is Large ribosomal subunit protein bL36 (Prochlorococcus marinus (strain MIT 9312)).